Reading from the N-terminus, the 955-residue chain is Isoleucine--tRNA ligase (955 aa).

The 'HIGH' region motif lies at 60–70; that stretch reads PYANGDLHIGH. Glu-563 is a binding site for L-isoleucyl-5'-AMP. The 'KMSKS' region signature appears at 604 to 608; it reads KMSKS. Lys-607 is an ATP binding site. Cys-926, Cys-929, Cys-946, and Cys-949 together coordinate Zn(2+).

Belongs to the class-I aminoacyl-tRNA synthetase family. IleS type 1 subfamily. Monomer. Zn(2+) serves as cofactor.

It is found in the cytoplasm. It carries out the reaction tRNA(Ile) + L-isoleucine + ATP = L-isoleucyl-tRNA(Ile) + AMP + diphosphate. Functionally, catalyzes the attachment of isoleucine to tRNA(Ile). As IleRS can inadvertently accommodate and process structurally similar amino acids such as valine, to avoid such errors it has two additional distinct tRNA(Ile)-dependent editing activities. One activity is designated as 'pretransfer' editing and involves the hydrolysis of activated Val-AMP. The other activity is designated 'posttransfer' editing and involves deacylation of mischarged Val-tRNA(Ile). The sequence is that of Isoleucine--tRNA ligase from Cyanothece sp. (strain PCC 7425 / ATCC 29141).